Reading from the N-terminus, the 290-residue chain is Eukaryotic translation initiation factor 3 subunit G (290 aa).

The segment at 1 to 34 is disordered; sequence MSRLGNRAADWADDEEFDDPSALPAQQVTTNKDG. The RRM domain maps to 210–288; sequence ATLRVTNVSE…LILRVEFAKR (79 aa).

The protein belongs to the eIF-3 subunit G family. As to quaternary structure, component of the eukaryotic translation initiation factor 3 (eIF-3) complex.

The protein localises to the cytoplasm. Functionally, RNA-binding component of the eukaryotic translation initiation factor 3 (eIF-3) complex, which is involved in protein synthesis of a specialized repertoire of mRNAs and, together with other initiation factors, stimulates binding of mRNA and methionyl-tRNAi to the 40S ribosome. The eIF-3 complex specifically targets and initiates translation of a subset of mRNAs involved in cell proliferation. This subunit can bind 18S rRNA. The protein is Eukaryotic translation initiation factor 3 subunit G (tif35) of Aspergillus fumigatus (strain CBS 144.89 / FGSC A1163 / CEA10) (Neosartorya fumigata).